The sequence spans 471 residues: Cytolysin (471 aa).

The first 20 residues, 1 to 20 (MKKMTLFTLSLLATAVQVGA), serve as a signal peptide directing secretion. One can recognise a Ricin B-type lectin domain in the interval 338–465 (AHVTLQSLSN…EANQARWKPT (128 aa)).

This sequence belongs to the HlyA hemolysin family.

In terms of biological role, bacterial hemolysins are exotoxins that attack blood cell membranes and cause cell rupture by mechanisms not clearly defined. In Vibrio vulnificus (strain CMCP6), this protein is Cytolysin (vvhA).